The primary structure comprises 510 residues: Probable cytosol aminopeptidase (510 aa).

Mn(2+) contacts are provided by Lys282 and Asp287. Residue Lys294 is part of the active site. 3 residues coordinate Mn(2+): Asp305, Asp364, and Glu366. Arg368 is an active-site residue.

Belongs to the peptidase M17 family. It depends on Mn(2+) as a cofactor.

It is found in the cytoplasm. The catalysed reaction is Release of an N-terminal amino acid, Xaa-|-Yaa-, in which Xaa is preferably Leu, but may be other amino acids including Pro although not Arg or Lys, and Yaa may be Pro. Amino acid amides and methyl esters are also readily hydrolyzed, but rates on arylamides are exceedingly low.. The enzyme catalyses Release of an N-terminal amino acid, preferentially leucine, but not glutamic or aspartic acids.. In terms of biological role, presumably involved in the processing and regular turnover of intracellular proteins. Catalyzes the removal of unsubstituted N-terminal amino acids from various peptides. This chain is Probable cytosol aminopeptidase, found in Cupriavidus metallidurans (strain ATCC 43123 / DSM 2839 / NBRC 102507 / CH34) (Ralstonia metallidurans).